The sequence spans 436 residues: Trigger factor (436 aa).

2 disordered regions span residues 1–26 and 81–100; these read MQVS…RVEN and QESL…TGEG. A PPIase FKBP-type domain is found at 161–246; it reads EDRVVIDFHG…VKRVEEPQLP (86 aa).

The protein belongs to the FKBP-type PPIase family. Tig subfamily.

The protein resides in the cytoplasm. The enzyme catalyses [protein]-peptidylproline (omega=180) = [protein]-peptidylproline (omega=0). Its function is as follows. Involved in protein export. Acts as a chaperone by maintaining the newly synthesized protein in an open conformation. Functions as a peptidyl-prolyl cis-trans isomerase. This chain is Trigger factor, found in Halorhodospira halophila (strain DSM 244 / SL1) (Ectothiorhodospira halophila (strain DSM 244 / SL1)).